Here is a 772-residue protein sequence, read N- to C-terminus: Phenylalanine--tRNA ligase beta subunit (772 aa).

A tRNA-binding domain is found at 40 to 158; the sequence is IKPSTNLVFA…DHYKTPNQIF (119 aa). One can recognise a B5 domain in the interval 397–468; sequence SVHNVIKNKI…KKISIQEIKP (72 aa). Residues Asp446, Asp452, Glu455, and Asp456 each contribute to the Mg(2+) site. One can recognise an FDX-ACB domain in the interval 691–772; that stretch reads SMYHDVIRDI…QEVNNYLKQF (82 aa).

This sequence belongs to the phenylalanyl-tRNA synthetase beta subunit family. Type 1 subfamily. Tetramer of two alpha and two beta subunits. Mg(2+) is required as a cofactor.

The protein localises to the cytoplasm. It catalyses the reaction tRNA(Phe) + L-phenylalanine + ATP = L-phenylalanyl-tRNA(Phe) + AMP + diphosphate + H(+). The protein is Phenylalanine--tRNA ligase beta subunit (pheT) of Ureaplasma parvum serovar 3 (strain ATCC 700970).